The following is a 360-amino-acid chain: Peptide chain release factor 1 (360 aa).

Gln235 bears the N5-methylglutamine mark.

This sequence belongs to the prokaryotic/mitochondrial release factor family. Methylated by PrmC. Methylation increases the termination efficiency of RF1.

It is found in the cytoplasm. In terms of biological role, peptide chain release factor 1 directs the termination of translation in response to the peptide chain termination codons UAG and UAA. The polypeptide is Peptide chain release factor 1 (Burkholderia cenocepacia (strain HI2424)).